The sequence spans 630 residues: Pentatricopeptide repeat-containing protein At2g03880, mitochondrial (630 aa).

The transit peptide at 1 to 76 directs the protein to the mitochondrion; that stretch reads MKSVMSKIKL…LIKCCISNRA (76 aa). 11 PPR repeats span residues 60–94, 95–125, 126–160, 161–192, 193–223, 224–258, 259–289, 292–322, 323–357, 358–388, and 394–424; these read DSATYSELIKCCISNRAVHEGNLICRHLYFNGHRP, MMFLVNVLINMYVKFNLLNDAHQLFDQMPQR, NVISWTTMISAYSKCKIHQKALELLVLMLRDNVRP, NVYTYSSVLRSCNGMSDVRMLHCGIIKEGLES, DVFVRSALIDVFAKLGEPEDALSVFDEMVTG, DAIVWNSIIGGFAQNSRSDVALELFKRMKRAGFIA, EQATLTSVLRACTGLALLELGMQAHVHIVKY, DLILNNALVDMYCKCGSLEDALRVFNQMKER, DVITWSTMISGLAQNGYSQEALKLFERMKSSGTKP, NYITIVGVLFACSHAGLLEDGWYYFRSMKKL, and VREHYGCMIDLLGKAGKLDDAVKLLNEMECE. A type E motif region spans residues 429–504; sequence TWRTLLGACR…EPGCSWIEVN (76 aa). A type E(+) motif region spans residues 505–535; it reads KQIHAFIIGDNSHPQIVEVSKKLNQLIHRLT. The interval 536 to 630 is type DYW motif; that stretch reads GIGYVPETNF…DGKCSCGDYW (95 aa).

Belongs to the PPR family. PCMP-H subfamily.

The protein localises to the mitochondrion. The sequence is that of Pentatricopeptide repeat-containing protein At2g03880, mitochondrial (PCMP-H44) from Arabidopsis thaliana (Mouse-ear cress).